We begin with the raw amino-acid sequence, 310 residues long: uncharacterized protein (310 aa).

A run of 9 helical transmembrane segments spans residues 1–21, 38–58, 74–94, 110–130, 135–155, 194–214, 228–248, 256–276, and 284–304; these read MIYF…MFSK, FFFY…VVYT, TSYF…FFIF, YGLW…SFLF, WILY…IFFS, IFIT…IVFS, LFII…MYLF, FPIM…KILI, and IFLT…INLI.

The protein belongs to the TerC family.

It localises to the cell membrane. This is an uncharacterized protein from Buchnera aphidicola subsp. Schizaphis graminum (strain Sg).